The primary structure comprises 420 residues: Pyridinium-3,5-bisthiocarboxylic acid mononucleotide nickel insertion protein (420 aa).

The tract at residues 81–104 is disordered; that stretch reads NHEHKHNHHEIKNDEPAHSHEHHH. Basic and acidic residues predominate over residues 90-99; the sequence is EIKNDEPAHS.

The protein belongs to the LarC family.

The catalysed reaction is Ni(II)-pyridinium-3,5-bisthiocarboxylate mononucleotide = pyridinium-3,5-bisthiocarboxylate mononucleotide + Ni(2+). Functionally, involved in the biosynthesis of a nickel-pincer cofactor ((SCS)Ni(II) pincer complex). Binds Ni(2+), and functions in nickel delivery to pyridinium-3,5-bisthiocarboxylic acid mononucleotide (P2TMN), to form the mature cofactor. Is thus probably required for the activation of nickel-pincer cofactor-dependent enzymes. The protein is Pyridinium-3,5-bisthiocarboxylic acid mononucleotide nickel insertion protein of Clostridium acetobutylicum (strain ATCC 824 / DSM 792 / JCM 1419 / IAM 19013 / LMG 5710 / NBRC 13948 / NRRL B-527 / VKM B-1787 / 2291 / W).